The following is a 465-amino-acid chain: MLPSTIQTLTLFLTSGGVLLSLYVSASLSYLLYSDILLKFSPKITAPTMTLDCTNASNVQAVNRSATKEMTFLLPEPEWTYPRLSCQGSTFQKALLISPHRFGEARGNSAPLIIREPFIACGPKECKHFALTHYAAQPGGYYNGTREDRNKLRHLISVKLGKIPTVENSIFHMAAWSGSACHDGREWTYIGVDGPDSNALIKIKYGEAYTDTYHSYANNILRTQESACNCIGGDCYLMITDGSASGISKCRFLKIREGRIIKEIFPTGRVEHTEECTCGFASNKTIECACRDNNYTAKRPFVKLNVETDTAEIRLMCTETYLDTPRPDDGSITGPCESNGDKGRGGIKGGFVHQRMASKIGRWYSRTMSKTERMGMELYVKYDGDPWTDSDALDPSGVMVSIKEPGWYSFGFEIKDKKCDVPCIGIEMVHDGGKKTWHSAATAIYCLMGSGQLLWDTVTGVDMAL.

Residues 1–11 (MLPSTIQTLTL) lie on the Intravirion side of the membrane. A helical membrane pass occupies residues 12–34 (FLTSGGVLLSLYVSASLSYLLYS). The interval 13 to 35 (LTSGGVLLSLYVSASLSYLLYSD) is involved in apical transport and lipid raft association. Over 35 to 465 (DILLKFSPKI…DTVTGVDMAL (431 aa)) the chain is Virion surface. The segment at 38 to 85 (LKFSPKITAPTMTLDCTNASNVQAVNRSATKEMTFLLPEPEWTYPRLS) is hypervariable stalk region. N-linked (GlcNAc...) asparagine; by host glycans are attached at residues Asn55 and Asn63. Intrachain disulfides connect Cys86/Cys419, Cys121/Cys126, Cys181/Cys228, Cys230/Cys235, Cys276/Cys290, Cys278/Cys288, Cys317/Cys336, and Cys423/Cys446. The interval 88–465 (GSTFQKALLI…DTVTGVDMAL (378 aa)) is head of neuraminidase. Residue Arg115 coordinates substrate. An N-linked (GlcNAc...) asparagine; by host glycan is attached at Asn143. The active-site Proton donor/acceptor is Asp148. Arg149 lines the substrate pocket. 274–275 (EE) is a binding site for substrate. Asn283 carries an N-linked (GlcNAc...) asparagine; by host glycan. Arg291 is a binding site for substrate. Asp292 lines the Ca(2+) pocket. Asn294 carries N-linked (GlcNAc...) asparagine; by host glycosylation. Position 323 (Asp323) interacts with Ca(2+). Arg373 is a binding site for substrate. Catalysis depends on Tyr408, which acts as the Nucleophile.

This sequence belongs to the glycosyl hydrolase 34 family. In terms of assembly, homotetramer. The cofactor is Ca(2+). In terms of processing, N-glycosylated.

It is found in the virion membrane. The protein resides in the host apical cell membrane. It catalyses the reaction Hydrolysis of alpha-(2-&gt;3)-, alpha-(2-&gt;6)-, alpha-(2-&gt;8)- glycosidic linkages of terminal sialic acid residues in oligosaccharides, glycoproteins, glycolipids, colominic acid and synthetic substrates.. With respect to regulation, inhibited by the neuraminidase inhibitors zanamivir (Relenza) and oseltamivir (Tamiflu). These drugs interfere with the release of progeny virus from infected cells and are effective against all influenza strains. Resistance to neuraminidase inhibitors is quite rare. Catalyzes the removal of terminal sialic acid residues from viral and cellular glycoconjugates. Cleaves off the terminal sialic acids on the glycosylated HA during virus budding to facilitate virus release. Additionally helps virus spread through the circulation by further removing sialic acids from the cell surface. These cleavages prevent self-aggregation and ensure the efficient spread of the progeny virus from cell to cell. Otherwise, infection would be limited to one round of replication. Described as a receptor-destroying enzyme because it cleaves a terminal sialic acid from the cellular receptors. May facilitate viral invasion of the upper airways by cleaving the sialic acid moieties on the mucin of the airway epithelial cells. Likely to plays a role in the budding process through its association with lipid rafts during intracellular transport. May additionally display a raft-association independent effect on budding. Plays a role in the determination of host range restriction on replication and virulence. Sialidase activity in late endosome/lysosome traffic seems to enhance virus replication. This Influenza B virus (strain B/Victoria/3/1985) protein is Neuraminidase.